The sequence spans 165 residues: Protoporphyrinogen IX oxidase (165 aa).

Transmembrane regions (helical) follow at residues 26-46 (LHVI…RLFV), 77-97 (AMIA…IVDW), 99-119 (MLWP…HMWL), and 145-165 (PTLL…YWGF). H27 is a binding site for heme. K105 serves as a coordination point for heme.

The protein belongs to the HemJ family. As to quaternary structure, homodimer. Requires heme b as cofactor.

The protein localises to the cell membrane. It catalyses the reaction protoporphyrinogen IX + 3 A = protoporphyrin IX + 3 AH2. Its pathway is porphyrin-containing compound metabolism; protoporphyrin-IX biosynthesis; protoporphyrin-IX from protoporphyrinogen-IX: step 1/1. Functionally, catalyzes the oxidation of protoporphyrinogen IX to protoporphyrin IX. Is involved in the biosynthesis of tetrapyrrole molecules like heme and chlorophyll. Does not use oxygen or artificial electron acceptors such as menadione or benzoquinone. The polypeptide is Protoporphyrinogen IX oxidase (Cereibacter sphaeroides (strain ATCC 17023 / DSM 158 / JCM 6121 / CCUG 31486 / LMG 2827 / NBRC 12203 / NCIMB 8253 / ATH 2.4.1.) (Rhodobacter sphaeroides)).